A 505-amino-acid polypeptide reads, in one-letter code: MTEQKYVVALDQGTTSSRAVVLDHDANIVSVSQREFTQIYPQAGWVEHDPMEIYATQSSTLVEALGKAGIRSDEVAAIGITNQRETTVVWNKETGKPVYNAIVWQCRRTATICEELKARGLESYIRDNTGLVLDPYFSGTKIKWILDNVEGAREQAEAGQLLFGTVDTWLVWKMTQGRVHVTDYTNASRTMLFNINTLQWDEKILAEFNIPLSMMPEVKKSSEVYGQTNIGGKGGTRIPIAGIAGDQQAALYGQMCVQAGQAKNTYGTGCFLLMNTGQEKVTSHNGLLTTLACGPRGEPAYALEGAVFMGGASIQWLRDELKLISDARDSEYFATKVDTSNGVYVVPAFTGLGAPYWDAYARGTIVGLTRGVNSNHIIRATLESIAYQTRDVLDAMQADSGIKLSALRVDGGAVANNFLMQFQADVLDTEVHRPKVTEVTALGAAYLAGLAVGFWDGLEELQGKAEIDRSFKPHHDEEKRQRRYKGWKRAVKCAQAWAVLHNEEE.

Residue threonine 14 participates in ADP binding. ATP contacts are provided by threonine 14, threonine 15, and serine 16. Residue threonine 14 coordinates sn-glycerol 3-phosphate. Residue arginine 18 coordinates ADP. 4 residues coordinate sn-glycerol 3-phosphate: arginine 84, glutamate 85, tyrosine 136, and aspartate 246. Residues arginine 84, glutamate 85, tyrosine 136, aspartate 246, and glutamine 247 each contribute to the glycerol site. Residues threonine 268 and glycine 311 each coordinate ADP. Positions 268, 311, 315, and 412 each coordinate ATP. The ADP site is built by glycine 412 and asparagine 416.

It belongs to the FGGY kinase family.

The catalysed reaction is glycerol + ATP = sn-glycerol 3-phosphate + ADP + H(+). It functions in the pathway polyol metabolism; glycerol degradation via glycerol kinase pathway; sn-glycerol 3-phosphate from glycerol: step 1/1. Inhibited by fructose 1,6-bisphosphate (FBP). Key enzyme in the regulation of glycerol uptake and metabolism. Catalyzes the phosphorylation of glycerol to yield sn-glycerol 3-phosphate. The chain is Glycerol kinase from Vibrio cholerae serotype O1 (strain ATCC 39541 / Classical Ogawa 395 / O395).